Here is a 167-residue protein sequence, read N- to C-terminus: Ureidoglycolate lyase (167 aa).

The protein belongs to the ureidoglycolate lyase family. Homodimer. Ni(2+) serves as cofactor.

It catalyses the reaction (S)-ureidoglycolate = urea + glyoxylate. The protein operates within nitrogen metabolism; (S)-allantoin degradation. Catalyzes the catabolism of the allantoin degradation intermediate (S)-ureidoglycolate, generating urea and glyoxylate. Involved in the utilization of allantoin as nitrogen source. This is Ureidoglycolate lyase from Pseudomonas putida (strain W619).